Reading from the N-terminus, the 325-residue chain is Probable ABC transporter permease YtrD (325 aa).

Transmembrane regions (helical) follow at residues 16–36 (VALVITILVFILGNPLSILNM), 63–83 (SSFISLFWIWGVVLAVSQLGI), 113–133 (MVIVVPQLIGYVLSVLLIMLL), 146–166 (LGMIIVSMLAYSLVMAGGALT), 179–199 (VAISPFLLISLPVINLEILFG), 233–253 (YLVIPAIMTIIFYIIGYISFV), 272–292 (PVQIIVIIIGIMGFGYFGFTA), and 298–318 (GYLIGMGTGAVIGFLISYFAI).

It belongs to the ABC-5 integral membrane protein family. In terms of assembly, the complex is composed of 2 ATP-binding proteins (YtrB and YtrE), 2 transmembrane proteins (YtrC and YtrD) and a solute-binding protein (YtrF).

Its subcellular location is the cell membrane. Functionally, part of the ABC transporter complex YtrBCDEF that plays a role in acetoin utilization during stationary phase and sporulation. This is Probable ABC transporter permease YtrD (ytrD) from Bacillus subtilis (strain 168).